A 64-amino-acid polypeptide reads, in one-letter code: Large ribosomal subunit protein bL35 (64 aa).

It belongs to the bacterial ribosomal protein bL35 family.

The polypeptide is Large ribosomal subunit protein bL35 (Coxiella burnetii (strain RSA 493 / Nine Mile phase I)).